We begin with the raw amino-acid sequence, 254 residues long: Probable protein ABIL5 (254 aa).

The interval 1–26 (MEVAEAGVDGVAGRRQQEEASGAAPF) is disordered.

It belongs to the ABI family. Binds SCAR.

Its subcellular location is the cytoplasm. The protein resides in the cytoskeleton. In terms of biological role, involved in regulation of actin and microtubule organization. Part of a WAVE complex that activates the Arp2/3 complex. This is Probable protein ABIL5 from Oryza sativa subsp. japonica (Rice).